A 139-amino-acid chain; its full sequence is ATP synthase epsilon chain (139 aa).

Belongs to the ATPase epsilon chain family. As to quaternary structure, F-type ATPases have 2 components, CF(1) - the catalytic core - and CF(0) - the membrane proton channel. CF(1) has five subunits: alpha(3), beta(3), gamma(1), delta(1), epsilon(1). CF(0) has three main subunits: a, b and c.

It is found in the cell membrane. Functionally, produces ATP from ADP in the presence of a proton gradient across the membrane. This is ATP synthase epsilon chain from Symbiobacterium thermophilum (strain DSM 24528 / JCM 14929 / IAM 14863 / T).